Consider the following 101-residue polypeptide: Small ribosomal subunit protein uS14 (101 aa).

The disordered stretch occupies residues Met-1–Asp-20. Residues Lys-11–Asp-20 are compositionally biased toward basic and acidic residues.

The protein belongs to the universal ribosomal protein uS14 family. As to quaternary structure, part of the 30S ribosomal subunit. Contacts proteins S3 and S10.

Functionally, binds 16S rRNA, required for the assembly of 30S particles and may also be responsible for determining the conformation of the 16S rRNA at the A site. The sequence is that of Small ribosomal subunit protein uS14 from Granulibacter bethesdensis (strain ATCC BAA-1260 / CGDNIH1).